Here is a 354-residue protein sequence, read N- to C-terminus: MKVLGIESSCDETGVAVYDTALSGVPALRAHAVYSQIALHAEYGGVVPELASRDHVRKLLPLIRQTLGEAGVGIDELDGVAYTAGPGLVGALLVGAGVARSLAWALDVPAIGVHHMEGHLLAPLMEDDPPEPPFVALLVSGGHTQLVSVKALGSYEVLGETLDDAAGEAFDKTAKMMGLPYPGGPQLAALAETGTPGRYRFARPMTDRPGLDFSFSGLKTQVLLAWRSSDQSDTTRADIARGFEDAVVDTLVIKCLRALDAAECNTLVVAGGVGVNKRLRARLQEAAQRRGGRVCFPRPALCTDNGAMIAFAGALRLQAGERADAAVHVTPRWDMAALPPLAAGRDSGVEIREW.

Residues His115 and His119 each coordinate Fe cation. Residues 138–142 (LVSGG), Asp171, Gly184, and Asn276 each bind substrate. Asp304 contacts Fe cation.

The protein belongs to the KAE1 / TsaD family. Requires Fe(2+) as cofactor.

It is found in the cytoplasm. It carries out the reaction L-threonylcarbamoyladenylate + adenosine(37) in tRNA = N(6)-L-threonylcarbamoyladenosine(37) in tRNA + AMP + H(+). Functionally, required for the formation of a threonylcarbamoyl group on adenosine at position 37 (t(6)A37) in tRNAs that read codons beginning with adenine. Is involved in the transfer of the threonylcarbamoyl moiety of threonylcarbamoyl-AMP (TC-AMP) to the N6 group of A37, together with TsaE and TsaB. TsaD likely plays a direct catalytic role in this reaction. The polypeptide is tRNA N6-adenosine threonylcarbamoyltransferase (Xanthomonas oryzae pv. oryzae (strain MAFF 311018)).